A 433-amino-acid polypeptide reads, in one-letter code: 23S rRNA (uracil(1939)-C(5))-methyltransferase RlmD (433 aa).

A TRAM domain is found at 10–68 (RTTTRQIITVSVNDLDSFGQGVARHNGKTLFIPGLLPQENAEVTVTEDKKQYARAKVVR). Residues C81, C87, C90, and C162 each coordinate [4Fe-4S] cluster. Residues Q265, F294, N299, E315, N342, and D363 each coordinate S-adenosyl-L-methionine. Catalysis depends on C389, which acts as the Nucleophile.

It belongs to the class I-like SAM-binding methyltransferase superfamily. RNA M5U methyltransferase family. RlmD subfamily.

It carries out the reaction uridine(1939) in 23S rRNA + S-adenosyl-L-methionine = 5-methyluridine(1939) in 23S rRNA + S-adenosyl-L-homocysteine + H(+). Functionally, catalyzes the formation of 5-methyl-uridine at position 1939 (m5U1939) in 23S rRNA. This chain is 23S rRNA (uracil(1939)-C(5))-methyltransferase RlmD, found in Shigella boydii serotype 4 (strain Sb227).